A 339-amino-acid chain; its full sequence is MNASDASMTVIGAGSYGTALAITLARNGHRVVLWGHNPAHIQALQAARCNQAFLPDVPFPDSLQLETNLGQALAASRNVLVVVPSHVFGDVLRQLKPHLRADARIVWATKGLEAETGRLLQDVAREALGETIPLAVVSGPTFAKELAAGMPTAIALASTDREFADDLQRLLHCGKSFRVYSNPDFIGVQLGGAVKNVIAIGAGMSDGIGFGANARTALITRGLAEMTRLGTALGADPTTFMGMAGLGDLVLTCTDNQSRNRRFGMMLGQGMDVQSAQDSIGQVVEGYRNTKEVLALAQRYGVEMPITEQLWQVLYCGKDAREAALSLLGRTRKDETAKL.

Positions 15, 16, 36, and 110 each coordinate NADPH. The sn-glycerol 3-phosphate site is built by K110, G139, and T141. A143 is an NADPH binding site. Sn-glycerol 3-phosphate contacts are provided by K195, D248, S258, R259, and N260. K195 functions as the Proton acceptor in the catalytic mechanism. Position 259 (R259) interacts with NADPH. NADPH-binding residues include V283 and E285.

Belongs to the NAD-dependent glycerol-3-phosphate dehydrogenase family.

Its subcellular location is the cytoplasm. It carries out the reaction sn-glycerol 3-phosphate + NAD(+) = dihydroxyacetone phosphate + NADH + H(+). The enzyme catalyses sn-glycerol 3-phosphate + NADP(+) = dihydroxyacetone phosphate + NADPH + H(+). It participates in membrane lipid metabolism; glycerophospholipid metabolism. Catalyzes the reduction of the glycolytic intermediate dihydroxyacetone phosphate (DHAP) to sn-glycerol 3-phosphate (G3P), the key precursor for phospholipid synthesis. The polypeptide is Glycerol-3-phosphate dehydrogenase [NAD(P)+] (Pectobacterium carotovorum subsp. carotovorum (strain PC1)).